Consider the following 86-residue polypeptide: uncharacterized protein (86 aa).

The protein to C.jejuni CJ0253.

This is an uncharacterized protein from Helicobacter pylori (strain J99 / ATCC 700824) (Campylobacter pylori J99).